Here is a 220-residue protein sequence, read N- to C-terminus: Phosphatidylserine decarboxylase proenzyme (220 aa).

Serine 188 acts as the Schiff-base intermediate with substrate; via pyruvic acid in catalysis. Position 188 is a pyruvic acid (Ser); by autocatalysis (serine 188).

The protein belongs to the phosphatidylserine decarboxylase family. PSD-A subfamily. In terms of assembly, heterodimer of a large membrane-associated beta subunit and a small pyruvoyl-containing alpha subunit. Pyruvate is required as a cofactor. Is synthesized initially as an inactive proenzyme. Formation of the active enzyme involves a self-maturation process in which the active site pyruvoyl group is generated from an internal serine residue via an autocatalytic post-translational modification. Two non-identical subunits are generated from the proenzyme in this reaction, and the pyruvate is formed at the N-terminus of the alpha chain, which is derived from the carboxyl end of the proenzyme. The post-translation cleavage follows an unusual pathway, termed non-hydrolytic serinolysis, in which the side chain hydroxyl group of the serine supplies its oxygen atom to form the C-terminus of the beta chain, while the remainder of the serine residue undergoes an oxidative deamination to produce ammonia and the pyruvoyl prosthetic group on the alpha chain.

It is found in the cell membrane. The catalysed reaction is a 1,2-diacyl-sn-glycero-3-phospho-L-serine + H(+) = a 1,2-diacyl-sn-glycero-3-phosphoethanolamine + CO2. It functions in the pathway phospholipid metabolism; phosphatidylethanolamine biosynthesis; phosphatidylethanolamine from CDP-diacylglycerol: step 2/2. Its function is as follows. Catalyzes the formation of phosphatidylethanolamine (PtdEtn) from phosphatidylserine (PtdSer). This chain is Phosphatidylserine decarboxylase proenzyme, found in Cytophaga hutchinsonii (strain ATCC 33406 / DSM 1761 / CIP 103989 / NBRC 15051 / NCIMB 9469 / D465).